The sequence spans 201 residues: Recombination protein RecR (201 aa).

The C4-type zinc finger occupies 57–72; that stretch reads CADCRTFTEQEVCNIC. The 96-residue stretch at 81–176 folds into the Toprim domain; that stretch reads GQICVVESPA…DASRIAHGVP (96 aa).

This sequence belongs to the RecR family.

May play a role in DNA repair. It seems to be involved in an RecBC-independent recombinational process of DNA repair. It may act with RecF and RecO. The protein is Recombination protein RecR of Klebsiella pneumoniae subsp. pneumoniae (strain ATCC 700721 / MGH 78578).